A 148-amino-acid chain; its full sequence is MLRVLSRRFYCKIAAKTNFKTAKLDFKELRYATKVPQTPVDTVFPETNANRVEIDAKTIQLLERLSLVNLDSEQALATLNSSIQFADKIAHINTENVRPLYTVLENQQLQLRNDEVKEGDCRVELLRNAKVTDEDYYVSPPGNIPLEQ.

This sequence belongs to the GatC family. Subunit of the heterotrimeric GatCAB amidotransferase (AdT) complex, composed of A, B and C subunits.

It is found in the mitochondrion. It catalyses the reaction L-glutamyl-tRNA(Gln) + L-glutamine + ATP + H2O = L-glutaminyl-tRNA(Gln) + L-glutamate + ADP + phosphate + H(+). In terms of biological role, allows the formation of correctly charged Gln-tRNA(Gln) through the transamidation of misacylated Glu-tRNA(Gln) in the mitochondria. The reaction takes place in the presence of glutamine and ATP through an activated gamma-phospho-Glu-tRNA(Gln). This chain is Glutamyl-tRNA(Gln) amidotransferase subunit C, mitochondrial, found in Drosophila pseudoobscura pseudoobscura (Fruit fly).